The chain runs to 61 residues: Small ribosomal subunit protein uS14 (61 aa).

Zn(2+) contacts are provided by C24, C27, C40, and C43.

This sequence belongs to the universal ribosomal protein uS14 family. Zinc-binding uS14 subfamily. As to quaternary structure, part of the 30S ribosomal subunit. Contacts proteins S3 and S10. Zn(2+) serves as cofactor.

Functionally, binds 16S rRNA, required for the assembly of 30S particles and may also be responsible for determining the conformation of the 16S rRNA at the A site. This chain is Small ribosomal subunit protein uS14, found in Petrotoga mobilis (strain DSM 10674 / SJ95).